Consider the following 72-residue polypeptide: Phosphonoacetate hydrolase (72 aa).

As to quaternary structure, monomer. Unlike bacterial phosphonoacetate hydrolase, does not require zinc as a cofactor. serves as cofactor.

It carries out the reaction phosphonoacetate + H2O = acetate + phosphate + H(+). Its activity is regulated as follows. Unaffected by EDTA or Ca(2+), Co(2+), Cu(2+), Mg(2+), Mn(2+), Ni(2+) and Zn(2+). This Penicillium oxalicum protein is Phosphonoacetate hydrolase.